The following is a 329-amino-acid chain: Malate dehydrogenase (329 aa).

12–18 (GAAGQIG) lines the NAD(+) pocket. The substrate site is built by Arg-95 and Arg-101. NAD(+) contacts are provided by residues Asn-108, Gln-115, and 132-134 (VGN). Positions 134 and 165 each coordinate substrate. Catalysis depends on His-190, which acts as the Proton acceptor.

The protein belongs to the LDH/MDH superfamily. MDH type 2 family.

It carries out the reaction (S)-malate + NAD(+) = oxaloacetate + NADH + H(+). Functionally, catalyzes the reversible oxidation of malate to oxaloacetate. This chain is Malate dehydrogenase, found in Polynucleobacter necessarius subsp. necessarius (strain STIR1).